A 459-amino-acid polypeptide reads, in one-letter code: Phosphoglucosamine mutase (459 aa).

The Phosphoserine intermediate role is filled by Ser-106. Mg(2+) is bound by residues Ser-106, Asp-247, Asp-249, and Asp-251. A Phosphoserine modification is found at Ser-106.

The protein belongs to the phosphohexose mutase family. It depends on Mg(2+) as a cofactor. Activated by phosphorylation.

The catalysed reaction is alpha-D-glucosamine 1-phosphate = D-glucosamine 6-phosphate. Functionally, catalyzes the conversion of glucosamine-6-phosphate to glucosamine-1-phosphate. This is Phosphoglucosamine mutase from Chlamydia muridarum (strain MoPn / Nigg).